Reading from the N-terminus, the 208-residue chain is Small ribosomal subunit protein uS4 (208 aa).

One can recognise an S4 RNA-binding domain in the interval 97–160 (TRLDNVCYRM…QKQLRVQEAL (64 aa)).

It belongs to the universal ribosomal protein uS4 family. As to quaternary structure, part of the 30S ribosomal subunit. Contacts protein S5. The interaction surface between S4 and S5 is involved in control of translational fidelity.

One of the primary rRNA binding proteins, it binds directly to 16S rRNA where it nucleates assembly of the body of the 30S subunit. Functionally, with S5 and S12 plays an important role in translational accuracy. The sequence is that of Small ribosomal subunit protein uS4 from Xanthomonas oryzae pv. oryzae (strain MAFF 311018).